The sequence spans 429 residues: Histidinol dehydrogenase (429 aa).

Residues tyrosine 130, glutamine 191, and asparagine 214 each coordinate NAD(+). Substrate is bound by residues serine 237, glutamine 259, and histidine 262. The Zn(2+) site is built by glutamine 259 and histidine 262. Residues glutamate 327 and histidine 328 each act as proton acceptor in the active site. Substrate contacts are provided by histidine 328, aspartate 361, glutamate 415, and histidine 420. Aspartate 361 contributes to the Zn(2+) binding site. Residue histidine 420 coordinates Zn(2+).

Belongs to the histidinol dehydrogenase family. It depends on Zn(2+) as a cofactor.

It carries out the reaction L-histidinol + 2 NAD(+) + H2O = L-histidine + 2 NADH + 3 H(+). It participates in amino-acid biosynthesis; L-histidine biosynthesis; L-histidine from 5-phospho-alpha-D-ribose 1-diphosphate: step 9/9. In terms of biological role, catalyzes the sequential NAD-dependent oxidations of L-histidinol to L-histidinaldehyde and then to L-histidine. This Neisseria meningitidis serogroup A / serotype 4A (strain DSM 15465 / Z2491) protein is Histidinol dehydrogenase.